A 145-amino-acid polypeptide reads, in one-letter code: Superoxide dismutase [Mn/Fe] (145 aa).

Fe(3+) is bound by residues H10 and H64. Mn(2+)-binding residues include H10 and H64.

The protein belongs to the iron/manganese superoxide dismutase family. Mn(2+) serves as cofactor. Fe(3+) is required as a cofactor.

The enzyme catalyses 2 superoxide + 2 H(+) = H2O2 + O2. Functionally, destroys superoxide anion radicals which are normally produced within the cells and which are toxic to biological systems. Catalyzes the dismutation of superoxide anion radicals into O2 and H2O2 by successive reduction and oxidation of the transition metal ion at the active site. This chain is Superoxide dismutase [Mn/Fe] (sodA), found in Streptococcus alactolyticus.